The chain runs to 159 residues: Phosphopantetheine adenylyltransferase (159 aa).

Position 16 (H16) interacts with ATP. Residues K40, M72, and R86 each coordinate substrate. ATP is bound by residues 87–89 (GLR), E97, and 122–128 (YQYLSAS).

Belongs to the bacterial CoaD family. As to quaternary structure, homohexamer. Mg(2+) serves as cofactor.

The protein resides in the cytoplasm. It carries out the reaction (R)-4'-phosphopantetheine + ATP + H(+) = 3'-dephospho-CoA + diphosphate. It participates in cofactor biosynthesis; coenzyme A biosynthesis; CoA from (R)-pantothenate: step 4/5. Functionally, reversibly transfers an adenylyl group from ATP to 4'-phosphopantetheine, yielding dephospho-CoA (dPCoA) and pyrophosphate. The sequence is that of Phosphopantetheine adenylyltransferase from Dehalococcoides mccartyi (strain ATCC BAA-2266 / KCTC 15142 / 195) (Dehalococcoides ethenogenes (strain 195)).